The primary structure comprises 176 residues: Methylated-DNA--protein-cysteine methyltransferase (176 aa).

Cys-142 acts as the Nucleophile; methyl group acceptor in catalysis.

Belongs to the MGMT family.

It is found in the cytoplasm. It carries out the reaction a 6-O-methyl-2'-deoxyguanosine in DNA + L-cysteinyl-[protein] = S-methyl-L-cysteinyl-[protein] + a 2'-deoxyguanosine in DNA. The enzyme catalyses a 4-O-methyl-thymidine in DNA + L-cysteinyl-[protein] = a thymidine in DNA + S-methyl-L-cysteinyl-[protein]. Its function is as follows. Involved in the cellular defense against the biological effects of O6-methylguanine (O6-MeG) and O4-methylthymine (O4-MeT) in DNA. Repairs the methylated nucleobase in DNA by stoichiometrically transferring the methyl group to a cysteine residue in the enzyme. This is a suicide reaction: the enzyme is irreversibly inactivated. The chain is Methylated-DNA--protein-cysteine methyltransferase from Methanothermobacter thermautotrophicus (strain ATCC 29096 / DSM 1053 / JCM 10044 / NBRC 100330 / Delta H) (Methanobacterium thermoautotrophicum).